The chain runs to 143 residues: Large ribosomal subunit protein uL16 (143 aa).

The protein belongs to the universal ribosomal protein uL16 family. As to quaternary structure, part of the 50S ribosomal subunit.

Functionally, binds 23S rRNA and is also seen to make contacts with the A and possibly P site tRNAs. The protein is Large ribosomal subunit protein uL16 of Caulobacter vibrioides (strain ATCC 19089 / CIP 103742 / CB 15) (Caulobacter crescentus).